We begin with the raw amino-acid sequence, 146 residues long: Ribonuclease P protein component (146 aa).

This sequence belongs to the RnpA family. In terms of assembly, consists of a catalytic RNA component (M1 or rnpB) and a protein subunit.

It carries out the reaction Endonucleolytic cleavage of RNA, removing 5'-extranucleotides from tRNA precursor.. Its function is as follows. RNaseP catalyzes the removal of the 5'-leader sequence from pre-tRNA to produce the mature 5'-terminus. It can also cleave other RNA substrates such as 4.5S RNA. The protein component plays an auxiliary but essential role in vivo by binding to the 5'-leader sequence and broadening the substrate specificity of the ribozyme. The protein is Ribonuclease P protein component of Helicobacter hepaticus (strain ATCC 51449 / 3B1).